The chain runs to 125 residues: Small ribosomal subunit protein eS8 (125 aa).

The tract at residues 1-20 (MLWQGESIRKVTGGRRRPAQ) is disordered.

It belongs to the eukaryotic ribosomal protein eS8 family. In terms of assembly, part of the 30S ribosomal subunit.

The protein is Small ribosomal subunit protein eS8 of Methanoregula boonei (strain DSM 21154 / JCM 14090 / 6A8).